The chain runs to 670 residues: ATP synthase subunit alpha 2 (670 aa).

Residue 180-187 (GDRATGKT) participates in ATP binding. A disordered region spans residues 527-670 (AEDAAGDIGG…DAEAEARHKR (144 aa)). The segment covering 543–588 (ARGDADRDADHGANREVSREVSPEASREVSREVSREVSHEADRDAA) has biased composition (basic and acidic residues). The span at 589–599 (ADAARVAGRAP) shows a compositional bias: low complexity. Residues 621–639 (ADGDRASASRPRPDARGDA) are compositionally biased toward basic and acidic residues. Over residues 640 to 661 (ARTAPSPQGGAEVNVNAAANVD) the composition is skewed to low complexity.

It belongs to the ATPase alpha/beta chains family. As to quaternary structure, F-type ATPases have 2 components, CF(1) - the catalytic core - and CF(0) - the membrane proton channel. CF(1) has five subunits: alpha(3), beta(3), gamma(1), delta(1), epsilon(1). CF(0) has three main subunits: a(1), b(2) and c(9-12). The alpha and beta chains form an alternating ring which encloses part of the gamma chain. CF(1) is attached to CF(0) by a central stalk formed by the gamma and epsilon chains, while a peripheral stalk is formed by the delta and b chains.

It is found in the cell inner membrane. The catalysed reaction is ATP + H2O + 4 H(+)(in) = ADP + phosphate + 5 H(+)(out). In terms of biological role, produces ATP from ADP in the presence of a proton gradient across the membrane. The alpha chain is a regulatory subunit. This Burkholderia pseudomallei (strain 668) protein is ATP synthase subunit alpha 2.